Here is a 456-residue protein sequence, read N- to C-terminus: Bifunctional protein GlmU (456 aa).

The interval 1 to 229 (MSNSAMSVVI…LSEVEGVNNR (229 aa)) is pyrophosphorylase. UDP-N-acetyl-alpha-D-glucosamine contacts are provided by residues 11–14 (LAAG), Lys-25, Gln-76, 81–82 (GT), 103–105 (YGD), Gly-140, Glu-154, Asn-169, and Asn-227. A Mg(2+)-binding site is contributed by Asp-105. Asn-227 contacts Mg(2+). The segment at 230–250 (LQLSALERVYQREQADRLLLA) is linker. The interval 251–456 (GVMLLDPARF…SGWQRPVKKK (206 aa)) is N-acetyltransferase. Positions 333 and 351 each coordinate UDP-N-acetyl-alpha-D-glucosamine. The active-site Proton acceptor is the His-363. Residues Tyr-366 and Asn-377 each contribute to the UDP-N-acetyl-alpha-D-glucosamine site. Residues Ala-380, 386–387 (NY), Ser-405, Ala-423, and Arg-440 each bind acetyl-CoA.

This sequence in the N-terminal section; belongs to the N-acetylglucosamine-1-phosphate uridyltransferase family. In the C-terminal section; belongs to the transferase hexapeptide repeat family. In terms of assembly, homotrimer. The cofactor is Mg(2+).

Its subcellular location is the cytoplasm. The enzyme catalyses alpha-D-glucosamine 1-phosphate + acetyl-CoA = N-acetyl-alpha-D-glucosamine 1-phosphate + CoA + H(+). It carries out the reaction N-acetyl-alpha-D-glucosamine 1-phosphate + UTP + H(+) = UDP-N-acetyl-alpha-D-glucosamine + diphosphate. It functions in the pathway nucleotide-sugar biosynthesis; UDP-N-acetyl-alpha-D-glucosamine biosynthesis; N-acetyl-alpha-D-glucosamine 1-phosphate from alpha-D-glucosamine 6-phosphate (route II): step 2/2. It participates in nucleotide-sugar biosynthesis; UDP-N-acetyl-alpha-D-glucosamine biosynthesis; UDP-N-acetyl-alpha-D-glucosamine from N-acetyl-alpha-D-glucosamine 1-phosphate: step 1/1. The protein operates within bacterial outer membrane biogenesis; LPS lipid A biosynthesis. Catalyzes the last two sequential reactions in the de novo biosynthetic pathway for UDP-N-acetylglucosamine (UDP-GlcNAc). The C-terminal domain catalyzes the transfer of acetyl group from acetyl coenzyme A to glucosamine-1-phosphate (GlcN-1-P) to produce N-acetylglucosamine-1-phosphate (GlcNAc-1-P), which is converted into UDP-GlcNAc by the transfer of uridine 5-monophosphate (from uridine 5-triphosphate), a reaction catalyzed by the N-terminal domain. The sequence is that of Bifunctional protein GlmU from Pectobacterium carotovorum subsp. carotovorum (strain PC1).